A 408-amino-acid polypeptide reads, in one-letter code: uncharacterized protein (408 aa).

2 disordered regions span residues 218–265 (EPTA…TSER) and 367–408 (MESE…ETPN). A compositionally biased stretch (low complexity) spans 369–379 (SEVINSSSSTS). Over residues 394 to 408 (IVEEVPETAENETPN) the composition is skewed to acidic residues.

It to C.elegans C05E11.1.

This is an uncharacterized protein from Arabidopsis thaliana (Mouse-ear cress).